The following is a 459-amino-acid chain: Flavin-containing monooxygenase FMO GS-OX5 (459 aa).

17–22 (GAGAAG) contributes to the FAD binding site. 212–217 (GNFASG) contributes to the NADP(+) binding site.

This sequence belongs to the FMO family.

The enzyme catalyses a (Z)-omega-(methylsulfanyl)-N-sulfo-alkylhydroximate S-glucoside + NADPH + O2 + H(+) = a (Z)-omega-(methylsulfinyl)-alkyl-glucosinolate + NADP(+) + H2O. Its function is as follows. Catalyzes the conversion of methylthioalkyl glucosinolates into methylsulfinylalkyl glucosinolates. Specific for 8-methylthiooctyl (8-MTO) glucosinolates. This is Flavin-containing monooxygenase FMO GS-OX5 (FMOGS-OX5) from Arabidopsis thaliana (Mouse-ear cress).